Reading from the N-terminus, the 255-residue chain is MGRGRVELKRIENKINRQVTFSKRRTGLLKKAQEISVLCDAEVSLIVFSHKGKLFEYSSESCMEKVLERYERYSYAERQLIAPDSHVNAQTNWSMEYSRLKAKIELLERNQRHYLGEELEPMSLKDLQNLEQQLETALKHIRSRKNQLMNESLNHLQRKEKEIQEENSMLTKQIKERENILRTKQTQCEQLNRSVDDVPQPQPFQHPHLYMIAHQTSPFLNMGGLYQEEDQTAMRRNNLDLTLEPIYNYLGCYAA.

Residues 1-61 form the MADS-box domain; sequence MGRGRVELKR…GKLFEYSSES (61 aa). Residues 90–180 enclose the K-box domain; sequence QTNWSMEYSR…TKQIKERENI (91 aa). Residues 90–198 adopt a coiled-coil conformation; the sequence is QTNWSMEYSR…EQLNRSVDDV (109 aa).

Homodimer capable of binding to CArG-box sequences. As to expression, expressed in young flower primordia.

The protein localises to the nucleus. Probable transcription factor that promotes early floral meristem identity in synergy with APETALA1, FRUITFULL and LEAFY. Is required subsequently for the transition of an inflorescence meristem into a floral meristem. Seems to be partially redundant to the function of APETALA1. Positively regulates the APETALA1 and LEAFY expression. In Arabidopsis thaliana (Mouse-ear cress), this protein is Transcription factor CAULIFLOWER (CAL).